Here is a 1019-residue protein sequence, read N- to C-terminus: Insulin-degrading enzyme (1019 aa).

H108 serves as a coordination point for Zn(2+). E111 serves as the catalytic Proton acceptor. Positions 112 and 189 each coordinate Zn(2+). The residue at position 192 (K192) is an N6-succinyllysine. Residue 359 to 363 participates in substrate binding; the sequence is LVGGQ. An ATP-binding site is contributed by R429. K697 bears the N6-succinyllysine mark. The SlyX motif signature appears at 853 to 858; that stretch reads EKPPHY. Position 895 to 901 (895 to 901) interacts with ATP; sequence DKPKKLS.

The protein belongs to the peptidase M16 family. As to quaternary structure, homodimer. Can also form homotetramers. The cofactor is Zn(2+). As to expression, detected in brain and liver (at protein level). Detected in liver.

It is found in the cytoplasm. The protein resides in the cytosol. Its subcellular location is the cell membrane. It localises to the secreted. The enzyme catalyses Degradation of insulin, glucagon and other polypeptides. No action on proteins.. With respect to regulation, activated by ATP, other nucleotide triphosphates and small peptides. Inhibited by bacitracin. Plays a role in the cellular breakdown of insulin, APP peptides, IAPP peptides, natriuretic peptides, glucagon, bradykinin, kallidin, and other peptides, and thereby plays a role in intercellular peptide signaling. Substrate binding induces important conformation changes, making it possible to bind and degrade larger substrates, such as insulin. Contributes to the regulation of peptide hormone signaling cascades and regulation of blood glucose homeostasis via its role in the degradation of insulin, glucagon and IAPP. Plays a role in the degradation and clearance of APP-derived amyloidogenic peptides that are secreted by neurons and microglia. Degrades the natriuretic peptides ANP, BNP and CNP, inactivating their ability to raise intracellular cGMP. Also degrades an aberrant frameshifted 40-residue form of NPPA (fsNPPA) which is associated with familial atrial fibrillation in heterozygous patients. Involved in antigen processing. Produces both the N terminus and the C terminus of MAGEA3-derived antigenic peptide (EVDPIGHLY) that is presented to cytotoxic T lymphocytes by MHC class I. In Mus musculus (Mouse), this protein is Insulin-degrading enzyme (Ide).